The chain runs to 514 residues: Cytochrome P450 monooxygenase MO6277 (514 aa).

The helical transmembrane segment at Leu6 to Tyr26 threads the bilayer. Cys457 contacts heme.

Belongs to the cytochrome P450 family. Requires heme as cofactor.

The protein resides in the membrane. The catalysed reaction is polyporic acid + reduced [NADPH--hemoprotein reductase] + O2 = ascocorynin + oxidized [NADPH--hemoprotein reductase] + H2O + H(+). It functions in the pathway secondary metabolite biosynthesis. In terms of biological role, cytochrome P450 monooxygenase that hydroxylates polyporic acid produced by the nonribosomal peptide synthetase acyN to produce the less toxic metabolite ascocorynin. The hydrophobic substrate polyporic acid might approach the active site from the membrane and, after hydroxylation into ascocorynin, leaves into the cytoplasm. MO6277 appears vital to avoid high-level accumulation of polyporic acid in the fungal membrane. In Ascocoryne sarcoides (Purple jellydisc fungus), this protein is Cytochrome P450 monooxygenase MO6277.